Here is a 191-residue protein sequence, read N- to C-terminus: Large ribosomal subunit protein uL3 (191 aa).

Positions 115–137 (GGPASHGSRFHRRHGSIGNREWP) are disordered.

Belongs to the universal ribosomal protein uL3 family. Part of the 50S ribosomal subunit. Forms a cluster with proteins L14 and L19.

Functionally, one of the primary rRNA binding proteins, it binds directly near the 3'-end of the 23S rRNA, where it nucleates assembly of the 50S subunit. This Campylobacter jejuni subsp. jejuni serotype O:2 (strain ATCC 700819 / NCTC 11168) protein is Large ribosomal subunit protein uL3 (rplC).